The sequence spans 111 residues: Small ribosomal subunit protein bS16 (111 aa).

Positions Met92–Ala111 are disordered.

Belongs to the bacterial ribosomal protein bS16 family.

The protein is Small ribosomal subunit protein bS16 of Rickettsia akari (strain Hartford).